Reading from the N-terminus, the 112-residue chain is C-type natriuretic peptide 3 (112 aa).

An N-terminal signal peptide occupies residues 1-19 (MSLRAFMLCVCLLLQSVGA). Positions 20–90 (RPASELQNLE…SKRSWGRYKK (71 aa)) are excised as a propeptide. Residues 33 to 67 (QDQLSSTEHPEEDRLDRTREEPQLGGSSSREAADE) are disordered. Positions 40–54 (EHPEEDRLDRTREEP) are enriched in basic and acidic residues. Cysteine 96 and cysteine 112 form a disulfide bridge.

This sequence belongs to the natriuretic peptide family. As to expression, spinal cord, kidney, ovary, heart and spleen, and to a lower extent in brain and liver.

The protein localises to the secreted. Exhibits natriuretic and vasodepressant activity. Has cGMP-stimulating activity. May help to regulate body fluid homeostasis in a variety of aquatic environments. This Oryzias latipes (Japanese rice fish) protein is C-type natriuretic peptide 3.